The sequence spans 64 residues: Large ribosomal subunit protein bL32 (64 aa).

Belongs to the bacterial ribosomal protein bL32 family.

The sequence is that of Large ribosomal subunit protein bL32 from Flavobacterium johnsoniae (strain ATCC 17061 / DSM 2064 / JCM 8514 / BCRC 14874 / CCUG 350202 / NBRC 14942 / NCIMB 11054 / UW101) (Cytophaga johnsonae).